Consider the following 247-residue polypeptide: Triosephosphate isomerase (247 aa).

A substrate-binding site is contributed by 9–11; it reads NWK. His-94 functions as the Electrophile in the catalytic mechanism. Glu-165 (proton acceptor) is an active-site residue. Substrate is bound by residues Gly-171, Ser-209, and 230 to 231; that span reads GG.

The protein belongs to the triosephosphate isomerase family. Homodimer.

The protein localises to the cytoplasm. The enzyme catalyses D-glyceraldehyde 3-phosphate = dihydroxyacetone phosphate. It participates in carbohydrate biosynthesis; gluconeogenesis. Its pathway is carbohydrate degradation; glycolysis; D-glyceraldehyde 3-phosphate from glycerone phosphate: step 1/1. Functionally, involved in the gluconeogenesis. Catalyzes stereospecifically the conversion of dihydroxyacetone phosphate (DHAP) to D-glyceraldehyde-3-phosphate (G3P). The chain is Triosephosphate isomerase from Albidiferax ferrireducens (strain ATCC BAA-621 / DSM 15236 / T118) (Rhodoferax ferrireducens).